The primary structure comprises 172 residues: Adrenodoxin homolog, mitochondrial (172 aa).

The transit peptide at 1–16 (MLKIVTRAGHTARISN) directs the protein to the mitochondrion. Positions 61–163 (LKITFILKDG…GIRVALPQMT (103 aa)) constitute a 2Fe-2S ferredoxin-type domain. Residues C98, C104, C107, and C144 each contribute to the [2Fe-2S] cluster site.

It belongs to the adrenodoxin/putidaredoxin family. As to quaternary structure, interacts in its reduced state with the apo form of ISU1. The cofactor is [2Fe-2S] cluster.

It localises to the mitochondrion matrix. Iron-sulfur protein that transfers electrons in a wide variety of metabolic reactions. Involved in heme A biosynthesis and in iron-sulfur cluster assembly. Transfers electrons from adrenodoxin reductase ARH1 to heme A synthase COX15, a heme protein that catalyzes the conversion of heme O to heme A. Required for the de novo synthesis of Fe-S clusters on iron sulfur cluster assembly protein ISU1. Interact in its reduced state with ISU1 to productively deliver electrons for Fe-S cluster synthesis. Essential for coenzyme Q biosynthesis. May transfer the electrons required for the hydroxylation reaction performed by COQ6. In Saccharomyces cerevisiae (strain ATCC 204508 / S288c) (Baker's yeast), this protein is Adrenodoxin homolog, mitochondrial.